An 842-amino-acid chain; its full sequence is Squamosa promoter-binding-like protein 9 (842 aa).

The span at 1–18 shows a compositional bias: gly residues; sequence MDAPGGGGGGGGGGGGVD. Disordered regions lie at residues 1–22, 59–97, and 140–168; these read MDAP…AGEP, ALLP…RVRK, and RKKP…TPAE. Over residues 69–85 the composition is skewed to low complexity; that stretch reads PAEAEAEAAGPASLPSS. Over residues 146 to 162 the composition is skewed to gly residues; the sequence is AGRGSGAAVGGSGGGAS. Residues 168–245 form an SBP-type; atypical zinc finger; sequence EMKCQVPGCE…ERHNKRRRRK (78 aa). Residues Cys171, Cys176, Cys193, Cys196, Cys212, Cys215, His219, and Cys231 each contribute to the Zn(2+) site. Residues 228 to 244 carry the Bipartite nuclear localization signal motif; the sequence is KRSCRRKLERHNKRRRR. Over residues 236–246 the composition is skewed to basic residues; sequence ERHNKRRRRKP. A disordered region spans residues 236-256; the sequence is ERHNKRRRRKPDSKGILEKDI.

Ubiquitous.

Its subcellular location is the nucleus. Its function is as follows. Trans-acting factor that binds specifically to the consensus nucleotide sequence 5'-TNCGTACAA-3'. The polypeptide is Squamosa promoter-binding-like protein 9 (SPL9) (Oryza sativa subsp. japonica (Rice)).